We begin with the raw amino-acid sequence, 107 residues long: Universal stress protein B homolog (107 aa).

A run of 2 helical transmembrane segments spans residues 6–26 and 86–106; these read TILF…LTAL and VREL…AAFI.

Belongs to the universal stress protein B family.

It is found in the cell inner membrane. This is Universal stress protein B homolog from Vibrio parahaemolyticus serotype O3:K6 (strain RIMD 2210633).